Reading from the N-terminus, the 391-residue chain is Putative 8-amino-7-oxononanoate synthase (391 aa).

Arg22 and His135 together coordinate substrate. Pyridoxal 5'-phosphate contacts are provided by residues Ser183, 208-211 (DDAH), and 239-242 (TLSK). The residue at position 242 (Lys242) is an N6-(pyridoxal phosphate)lysine. Thr358 is a binding site for substrate.

Belongs to the class-II pyridoxal-phosphate-dependent aminotransferase family. BioF subfamily. Homodimer. Pyridoxal 5'-phosphate is required as a cofactor.

The catalysed reaction is 6-carboxyhexanoyl-[ACP] + L-alanine + H(+) = (8S)-8-amino-7-oxononanoate + holo-[ACP] + CO2. The protein operates within cofactor biosynthesis; biotin biosynthesis. Its function is as follows. Catalyzes the decarboxylative condensation of pimeloyl-[acyl-carrier protein] and L-alanine to produce 8-amino-7-oxononanoate (AON), [acyl-carrier protein], and carbon dioxide. In Thermosynechococcus vestitus (strain NIES-2133 / IAM M-273 / BP-1), this protein is Putative 8-amino-7-oxononanoate synthase (bioF).